The primary structure comprises 304 residues: Ribosomal RNA small subunit methyltransferase H (304 aa).

S-adenosyl-L-methionine-binding positions include 37–39, Asp57, Phe79, Asp100, and His107; that span reads GGH.

It belongs to the methyltransferase superfamily. RsmH family.

Its subcellular location is the cytoplasm. The enzyme catalyses cytidine(1402) in 16S rRNA + S-adenosyl-L-methionine = N(4)-methylcytidine(1402) in 16S rRNA + S-adenosyl-L-homocysteine + H(+). Functionally, specifically methylates the N4 position of cytidine in position 1402 (C1402) of 16S rRNA. This Bacteroides fragilis (strain ATCC 25285 / DSM 2151 / CCUG 4856 / JCM 11019 / LMG 10263 / NCTC 9343 / Onslow / VPI 2553 / EN-2) protein is Ribosomal RNA small subunit methyltransferase H.